The chain runs to 513 residues: Sterol 14-alpha demethylase (513 aa).

A helical transmembrane segment spans residues 8–28 (AYALLAFVAIMALNVTYQFLF). 2 N-linked (GlcNAc...) asparagine glycosylation sites follow: N32 and N332. Residue C453 coordinates heme.

Belongs to the cytochrome P450 family. Requires heme as cofactor.

Its subcellular location is the endoplasmic reticulum membrane. It carries out the reaction a 14alpha-methyl steroid + 3 reduced [NADPH--hemoprotein reductase] + 3 O2 = a Delta(14) steroid + formate + 3 oxidized [NADPH--hemoprotein reductase] + 4 H2O + 4 H(+). It catalyses the reaction a 14alpha-methyl steroid + reduced [NADPH--hemoprotein reductase] + O2 = a 14alpha-hydroxymethyl steroid + oxidized [NADPH--hemoprotein reductase] + H2O + H(+). The enzyme catalyses a 14alpha-hydroxymethyl steroid + reduced [NADPH--hemoprotein reductase] + O2 = a 14alpha-formyl steroid + oxidized [NADPH--hemoprotein reductase] + 2 H2O + H(+). The catalysed reaction is a 14alpha-formyl steroid + reduced [NADPH--hemoprotein reductase] + O2 = a Delta(14) steroid + formate + oxidized [NADPH--hemoprotein reductase] + H2O + 2 H(+). It carries out the reaction lanosterol + 3 reduced [NADPH--hemoprotein reductase] + 3 O2 = 4,4-dimethyl-5alpha-cholesta-8,14,24-trien-3beta-ol + formate + 3 oxidized [NADPH--hemoprotein reductase] + 4 H2O + 4 H(+). It catalyses the reaction lanosterol + reduced [NADPH--hemoprotein reductase] + O2 = 32-hydroxylanosterol + oxidized [NADPH--hemoprotein reductase] + H2O + H(+). The enzyme catalyses 32-hydroxylanosterol + reduced [NADPH--hemoprotein reductase] + O2 = 32-oxolanosterol + oxidized [NADPH--hemoprotein reductase] + 2 H2O + H(+). The catalysed reaction is 32-oxolanosterol + reduced [NADPH--hemoprotein reductase] + O2 = 4,4-dimethyl-5alpha-cholesta-8,14,24-trien-3beta-ol + formate + oxidized [NADPH--hemoprotein reductase] + H2O + 2 H(+). It carries out the reaction eburicol + 3 reduced [NADPH--hemoprotein reductase] + 3 O2 = 14-demethyleburicol + formate + 3 oxidized [NADPH--hemoprotein reductase] + 4 H2O + 4 H(+). It catalyses the reaction eburicol + reduced [NADPH--hemoprotein reductase] + O2 = 32-hydroxyeburicol + oxidized [NADPH--hemoprotein reductase] + H2O + H(+). The enzyme catalyses 32-hydroxyeburicol + reduced [NADPH--hemoprotein reductase] + O2 = 32-oxoeburicol + oxidized [NADPH--hemoprotein reductase] + 2 H2O + H(+). The catalysed reaction is 32-oxoeburicol + reduced [NADPH--hemoprotein reductase] + O2 = 14-demethyleburicol + formate + oxidized [NADPH--hemoprotein reductase] + H2O + 2 H(+). It functions in the pathway steroid biosynthesis; sterol biosynthesis. Sterol 14alpha-demethylase, encoded by cyp51A, cyp51B and cyp51C, that plays a critical role in the third module of ergosterol biosynthesis pathway, being ergosterol the major sterol component in fungal membranes that participates in a variety of functions. The third module or late pathway involves the ergosterol synthesis itself through consecutive reactions that mainly occur in the endoplasmic reticulum (ER) membrane. In filamentous fungi, during the initial step of this module, lanosterol (lanosta-8,24-dien-3beta-ol) can be metabolized to eburicol. Sterol 14alpha-demethylase catalyzes the three-step oxidative removal of the 14alpha-methyl group (C-32) of both these sterols in the form of formate, and converts eburicol and lanosterol to 14-demethyleburicol (4,4,24-trimethylergosta-8,14,24(28)-trienol) and 4,4-dimethyl-5alpha-cholesta-8,14,24-trien-3beta-ol, respectively, which are further metabolized by other enzymes in the pathway to ergosterol. Can also use substrates not intrinsic to fungi, such as 24,25-dihydrolanosterol (DHL), producing 4,4'-dimethyl-8,14-cholestadien-3-beta-ol, but at lower rates than the endogenous substrates. Its function is as follows. As a target of azole drugs, plays a crucial role in azole drug susceptibility. The sequence is that of Sterol 14-alpha demethylase from Aspergillus flavus (strain ATCC 200026 / FGSC A1120 / IAM 13836 / NRRL 3357 / JCM 12722 / SRRC 167).